The primary structure comprises 373 residues: Glutamine synthetase (373 aa).

At Ala-2 the chain carries N-acetylalanine. The required for glutamine-induced ubiquitination by CRL4(CRBN) and proteasomal degradation stretch occupies residues Ala-2–Lys-25. Residues Lys-11 and Lys-14 each carry the N6-acetyllysine modification. The 83-residue stretch at Glu-24–Gln-106 folds into the GS beta-grasp domain. Tyr-104 carries the post-translational modification Phosphotyrosine. In terms of domain architecture, GS catalytic spans Leu-113 to Asn-373. An ATP-binding site is contributed by Glu-134. Glu-134, Glu-136, Glu-196, and Glu-203 together coordinate Mn(2+). Glu-203 to Pro-208 is an ATP binding site. L-glutamate is bound at residue Asn-246 to Trp-247. His-253 contacts Mn(2+). ATP is bound by residues Asn-255–Ser-257, Arg-319, and Arg-324. Position 319 (Arg-319) interacts with L-glutamate. Tyr-336–Glu-338 contacts ADP. Glu-338 provides a ligand contact to Mn(2+). Position 340 (Arg-340) interacts with L-glutamate. Phosphoserine is present on Ser-343.

The protein belongs to the glutamine synthetase family. In terms of assembly, decamer; composed of two pentamers. Interacts with PALMD. Interacts with RHOJ. Interacts with BEST2; this interaction tethers a fraction of GLUL to the membrane, causing a decrease of cytosolic glutamine synthase (GS) activity and inhibits the chloride channel activity of BEST2 by affecting the gating at the aperture in the absence of intracellular glutamate. Requires Mg(2+) as cofactor. It depends on Mn(2+) as a cofactor. Palmitoylated; undergoes autopalmitoylation. Post-translationally, acetylated by EP300/p300; acetylation is stimulated by increased glutamine levels and promotes ubiquitin-mediated proteasomal degradation. In terms of processing, ubiquitinated by ZNRF1. Ubiquitinated by the DCX (DDB1-CUL4-X-box) E3 ubiquitin-protein ligase complex called CRL4(CRBN), leading to proteasomal degradation.

The protein localises to the cytoplasm. Its subcellular location is the cytosol. The protein resides in the microsome. It localises to the mitochondrion. It is found in the cell membrane. The catalysed reaction is L-glutamate + NH4(+) + ATP = L-glutamine + ADP + phosphate + H(+). It catalyses the reaction L-cysteinyl-[protein] + hexadecanoyl-CoA = S-hexadecanoyl-L-cysteinyl-[protein] + CoA. Its activity is regulated as follows. Glutamine synthetase activity is inhibited by methionine sulfoximine (MSO). Functionally, glutamine synthetase that catalyzes the ATP-dependent conversion of glutamate and ammonia to glutamine. Its role depends on tissue localization: in the brain, it regulates the levels of toxic ammonia and converts neurotoxic glutamate to harmless glutamine, whereas in the liver, it is one of the enzymes responsible for the removal of ammonia. Plays a key role in ammonium detoxification during erythropoiesis: the glutamine synthetase activity is required to remove ammonium generated by porphobilinogen deaminase (HMBS) during heme biosynthesis to prevent ammonium accumulation and oxidative stress. Essential for proliferation of fetal skin fibroblasts. Independently of its glutamine synthetase activity, required for endothelial cell migration during vascular development. Involved in angiogenesis by regulating membrane localization and activation of the GTPase RHOJ, possibly by promoting RHOJ palmitoylation. May act as a palmitoyltransferase for RHOJ: able to autopalmitoylate and then transfer the palmitoyl group to RHOJ. Plays a role in ribosomal 40S subunit biogenesis. Through the interaction with BEST2, inhibits BEST2 channel activity by affecting the gating at the aperture in the absence of intracellular L-glutamate, but sensitizes BEST2 to intracellular L-glutamate, which promotes the opening of BEST2 and thus relieves its inhibitory effect on BEST2. In Cricetulus griseus (Chinese hamster), this protein is Glutamine synthetase.